We begin with the raw amino-acid sequence, 79 residues long: Small ribosomal subunit protein bS18 (79 aa).

As to quaternary structure, part of the 30S ribosomal subunit. Forms a tight heterodimer with protein bS6. Post-translationally, both N-terminus methionine truncation and retention have been observed for this protein. May be methylated up to 6 times, on undetermined residues.

Its function is as follows. Binds as a heterodimer with protein bS6 to the central domain of the 16S rRNA, where it helps stabilize the platform of the 30S subunit. This Rhodopseudomonas palustris (strain ATCC BAA-98 / CGA009) protein is Small ribosomal subunit protein bS18.